The chain runs to 479 residues: 5-hydroxytryptamine receptor 2B (479 aa).

Residues 1–55 (MASSYKMSEQSTTSEHILQKTCDHLILTNRSGLETDSVAEEMKQTVEGQGHTVHW) are Extracellular-facing. Asn29 carries an N-linked (GlcNAc...) asparagine glycan. Residues 56–78 (AALLILAVIIPTIGGNILVILAV) traverse the membrane as a helical segment. Residues 79–89 (ALEKRLQYATN) lie on the Cytoplasmic side of the membrane. Residues 90–112 (YFLMSLAIADLLVGLFVMPIALL) form a helical membrane-spanning segment. Residues 113 to 128 (TIMFEAIWPLPLALCP) are Extracellular-facing. Cys127 and Cys206 form a disulfide bridge. A helical transmembrane segment spans residues 129–150 (AWLFLDVLFSTASIMHLCAISL). Residues Asp134 and Thr139 each coordinate ergotamine. A DRY motif; important for ligand-induced conformation changes motif is present at residues 151 to 153 (DRY). Residues 151–170 (DRYIAIKKPIQANQCNSRAT) lie on the Cytoplasmic side of the membrane. A helical membrane pass occupies residues 171 to 191 (AFIKITVVWLISIGIAIPVPI). Residues 192 to 215 (KGIETDVINPHNVTCELTKDRFGS) are Extracellular-facing. Leu208 lines the ergotamine pocket. A [DE]RFG motif; may stabilize a conformation that preferentially activates signaling via beta-arrestin family members motif is present at residues 211–214 (DRFG). Residues 216-238 (FMVFGSLAAFFAPLTIMVVTYFL) traverse the membrane as a helical segment. The Cytoplasmic segment spans residues 239–323 (TIHTLQKKAY…TISNEQRASK (85 aa)). A helical membrane pass occupies residues 324 to 344 (ALGVVFFLFLLMWCPFFITNL). Residues 345–359 (TLALCDSCNQTTLKT) lie on the Extracellular side of the membrane. Residues Cys349 and Cys352 are joined by a disulfide bond. A helical transmembrane segment spans residues 360-381 (LLEIFVWIGYVSSGVNPLIYTL). Residues 375 to 379 (NPLIY) carry the NPxxY motif; important for ligand-induced conformation changes and signaling motif. Residues 382 to 479 (FNKTFREAFG…DKAEEQVSYI (98 aa)) are Cytoplasmic-facing. Residue Cys396 is the site of S-palmitoyl cysteine attachment. Residues 477-479 (SYI) carry the PDZ-binding motif.

The protein belongs to the G-protein coupled receptor 1 family. As to quaternary structure, interacts (via C-terminus) with MPDZ. As to expression, ubiquitous. Detected in intestine, heart, skeletal muscle, testis, urinary bladder, stomach, liver, lung, brain and kidney. Detected in osteoblasts. Detected in the raphe nucleus in the brain, in dorsal root ganglion neurons, the brain stem, cerebellum and spinal cord. Detected in interstitial cells of Cajal in the small intestine.

It localises to the cell membrane. The protein resides in the synapse. The protein localises to the synaptosome. G-protein coupled receptor for 5-hydroxytryptamine (serotonin). Also functions as a receptor for various ergot alkaloid derivatives and psychoactive substances. Ligand binding causes a conformation change that triggers signaling via guanine nucleotide-binding proteins (G proteins) and modulates the activity of downstream effectors. HTR2B is coupled to G(q)/G(11) G alpha proteins and activates phospholipase C-beta, releasing diacylglycerol (DAG) and inositol 1,4,5-trisphosphate (IP3) second messengers that modulate the activity of phosphatidylinositol 3-kinase and promote the release of Ca(2+) ions from intracellular stores, respectively. Beta-arrestin family members inhibit signaling via G proteins and mediate activation of alternative signaling pathways. Plays a role in the regulation of dopamine and 5-hydroxytryptamine release, 5-hydroxytryptamine uptake and in the regulation of extracellular dopamine and 5-hydroxytryptamine levels, and thereby affects neural activity. May play a role in the perception of pain. Plays a role in the regulation of behavior, including impulsive behavior. Required for normal proliferation of embryonic cardiac myocytes and normal heart development. Protects cardiomyocytes against apoptosis. Plays a role in the adaptation of pulmonary arteries to chronic hypoxia. Plays a role in vasoconstriction. Required for normal osteoblast function and proliferation, and for maintaining normal bone density. Required for normal proliferation of the interstitial cells of Cajal in the intestine. The protein is 5-hydroxytryptamine receptor 2B (Htr2b) of Mus musculus (Mouse).